The chain runs to 539 residues: Acid-sensing ion channel 4 (539 aa).

The Cytoplasmic segment spans residues 1–68 (MPIEIVCKIK…GPGPHGLRRT (68 aa)). The chain crosses the membrane as a helical span at residues 69–89 (LWALALLTSLAAFLYQAAGLA). Residues 90-438 (RGYLTRPHLV…EQRAAYGLSA (349 aa)) are Extracellular-facing. Cystine bridges form between C118/C202 and C180/C187. N-linked (GlcNAc...) asparagine glycosylation is found at N191 and N243. Cystine bridges form between C296–C375, C318–C371, C322–C369, C331–C353, and C333–C345. N376 carries an N-linked (GlcNAc...) asparagine glycan. Residues 439-459 (LLGDLGGQMGLFIGASILTLL) traverse the membrane as a helical segment. The GAS motif; ion selectivity filter motif lies at 452-454 (GAS). Residues 460 to 539 (EILDYIYEVS…PGGLFEDFAC (80 aa)) are Cytoplasmic-facing. The segment at 501–531 (EQSPCPSRGRVEGGGVSSLLPNHHHPHGPPG) is disordered.

The protein belongs to the amiloride-sensitive sodium channel (TC 1.A.6) family. ASIC4 subfamily. As to quaternary structure, homotrimer. Heterotrimer; with other ASIC proteins producing functional channels. As to expression, expressed in pituitary gland. Weakly expressed in brain, vestibular system and organ of Corti.

The protein resides in the cell membrane. Does not exhibit measurable stand-alone pH-gated sodium channel activity but may form pH-gated heterotrimeric sodium channels. Its activity could also depend on alternative gating mechanisms. This is Acid-sensing ion channel 4 from Homo sapiens (Human).